A 156-amino-acid chain; its full sequence is Small ribosomal subunit protein uS7 (156 aa).

The protein belongs to the universal ribosomal protein uS7 family. As to quaternary structure, part of the 30S ribosomal subunit. Contacts proteins S9 and S11.

In terms of biological role, one of the primary rRNA binding proteins, it binds directly to 16S rRNA where it nucleates assembly of the head domain of the 30S subunit. Is located at the subunit interface close to the decoding center, probably blocks exit of the E-site tRNA. This chain is Small ribosomal subunit protein uS7, found in Coprothermobacter proteolyticus (strain ATCC 35245 / DSM 5265 / OCM 4 / BT).